The sequence spans 489 residues: L-arabinose isomerase (489 aa).

The Mn(2+) site is built by Glu-300, Glu-325, His-342, and His-441.

The protein belongs to the arabinose isomerase family. Requires Mn(2+) as cofactor.

It catalyses the reaction beta-L-arabinopyranose = L-ribulose. It functions in the pathway carbohydrate degradation; L-arabinose degradation via L-ribulose; D-xylulose 5-phosphate from L-arabinose (bacterial route): step 1/3. In terms of biological role, catalyzes the conversion of L-arabinose to L-ribulose. This Clostridium beijerinckii (strain ATCC 51743 / NCIMB 8052) (Clostridium acetobutylicum) protein is L-arabinose isomerase.